The primary structure comprises 451 residues: Sex peptide receptor-related protein 2 (451 aa).

Topologically, residues 1–63 are extracellular; sequence MNYEVYCGNA…DNLEIVVYGQ (63 aa). Residue Asn-15 is glycosylated (N-linked (GlcNAc...) asparagine). A helical membrane pass occupies residues 64–84; it reads IFPILVLFAVFANAAVALVLS. At 85-97 the chain is on the cytoplasmic side; it reads KKHMITPTNVVLK. A helical transmembrane segment spans residues 98 to 118; that stretch reads YMAIAELLVGLVPLPWTLFFF. At 119 to 140 the chain is on the extracellular side; that stretch reads SMGNIKETHRLELWWCYLQKYS. Cysteines 134 and 225 form a disulfide. The helical transmembrane segment at 141–161 threads the bilayer; sequence MDAFPPVFHMIAMWLTVLLAA. Over 162-183 the chain is Cytoplasmic; the sequence is QRYVSISHPLHSRSACNVKNVR. The chain crosses the membrane as a helical span at residues 184-204; the sequence is LATMIITVTSFLCGLPKSFDY. Over 205–251 the chain is Extracellular; sequence EYETVHGWIYSHGNWTYASSCVMMPTAILTNMGQTVYFNIYFWTRAL. Residue Asn-218 is glycosylated (N-linked (GlcNAc...) asparagine). Residues 252 to 272 traverse the membrane as a helical segment; that stretch reads GFIILPSFLLVLLNGLLIKGI. At 273-301 the chain is on the cytoplasmic side; sequence RRAQRRKLRLLREKRSEEAARQRDSNSTS. Residues 302–322 traverse the membrane as a helical segment; sequence LMLVAIVSIFLIVNLPQAIFM. At 323-334 the chain is on the extracellular side; it reads GLLCVCETFTIK. The helical transmembrane segment at 335–355 threads the bilayer; the sequence is IPILEGTFPAVFLIASNMIVI. The Cytoplasmic portion of the chain corresponds to 356 to 451; the sequence is ATYPINFGIY…TQFTTMDRSD (96 aa).

Belongs to the G-protein coupled receptor 1 family. Expressed in head neurons including the ASE sensory neurons and the ASI and AWB chemosensory neurons, the midbody neurons SDQ, and motor neurons in the tail.

The protein localises to the cell membrane. Its function is as follows. G-protein coupled receptor for the neuropeptide like protein nlp-38. Plays a role in several types of aversive gustatory associative learning including gustatory plasticity and salt avoidance learning. Its role in salt avoidance learning may be through activation of the transcription factor crh-1/CREB and de novo transcription and translation, which in turn promotes the formation of long-term memory. The chain is Sex peptide receptor-related protein 2 from Caenorhabditis elegans.